The chain runs to 382 residues: Mannan endo-1,4-beta-mannosidase (382 aa).

Residues 1 to 19 (MVKLFSFLLLVWVASPAFS) form the signal peptide. Substrate is bound by residues tryptophan 83, asparagine 144, 147–151 (WDESK), and asparagine 180. Catalysis depends on glutamate 181, which acts as the Proton donor/acceptor. Positions 187, 204, 208, 243, 282, and 284 each coordinate substrate. Cysteine 195 and cysteine 262 are joined by a disulfide. Catalysis depends on glutamate 312, which acts as the Nucleophile. A disulfide bond links cysteine 317 and cysteine 349. Residues tryptophan 341 and aspartate 348 each coordinate substrate. The interval 346–350 (GGDCS) is involved in stabilization of the transition state.

Belongs to the glycosyl hydrolase 5 (cellulase A) family. In terms of assembly, monomer.

The protein localises to the secreted. It carries out the reaction Random hydrolysis of (1-&gt;4)-beta-D-mannosidic linkages in mannans, galactomannans and glucomannans.. Activated particularly by Ca(2+) and Zn(2+), and to a lesser extent by Na(+), K(+), Mg(2+) and Cu(2+). Activation effect of the divalent metal ions Ca(2+), Zn(2+), Mg(2+) and Cu(2+) is reduced significantly by the addition of EDTA. Strongly inhibited by Mn(2+), Hg(2+) and Ag(+). Its function is as follows. Hydrolyzes 1,4-beta linked polysaccharide backbones of mannans. Has high activity toward locust bean gum. Also active toward konjac and beta-1,4-mannan. Hydrolyzes mannotetraose (M4) and mannopentaose (M5) to mannobiose (M2) and mannotriose (M3) with a little production of mannose (M1). Hydrolyzes beta-1,4-mannan to M2, M3 and M4. Hardly hydrolyzes M2 and M3. Does not hydrolyze p-nitrophenyl-beta-D-mannopyranoside, gua-gum, carboxymethyl cellulose, soluble starch or laminarin. The protein is Mannan endo-1,4-beta-mannosidase of Cryptopygus antarcticus (Antarctic springtail).